Reading from the N-terminus, the 403-residue chain is Aspartic protease pepA (403 aa).

An N-terminal signal peptide occupies residues 1–20; sequence MVLITQLGAALAVFSALTVA. A propeptide spans 21-67 (activation peptide); that stretch reads APTKGKARFSAPQVGIPKKAKHHPAAAYARALHKFGMKIPKAVSDAA. Positions 82 to 400 constitute a Peptidase A1 domain; it reads YVTQVTVGGS…DTQGPRIGFA (319 aa). Asp98 is a catalytic residue. Asn270 is a glycosylation site (N-linked (GlcNAc...) asparagine). Asp293 is a catalytic residue. Residues Cys329 and Cys362 are joined by a disulfide bond.

The protein belongs to the peptidase A1 family. As to quaternary structure, monomer.

It localises to the secreted. Its function is as follows. Secreted aspartic endopeptidase that allows assimilation of proteinaceous substrates. The scissile peptide bond is attacked by a nucleophilic water molecule activated by two aspartic residues in the active site. Shows a broad primary substrate specificity. Favors hydrophobic residues at the P1 and P1' positions. In Arthroderma gypseum (strain ATCC MYA-4604 / CBS 118893) (Microsporum gypseum), this protein is Aspartic protease pepA.